A 431-amino-acid polypeptide reads, in one-letter code: Cyclic GMP-AMP synthase-like receptor (431 aa).

ATP is bound by residues Ser-73 and 85–87; that span reads EFD. Mg(2+)-binding residues include Glu-85, Asp-87, and Asp-212. Asp-212 contributes to the GTP binding site. ATP is bound by residues Lys-290 and 304–308; that span reads SYALK. Glu-316 contacts Mn(2+).

It belongs to the mab-21 family. The cofactor is Mg(2+). Mn(2+) is required as a cofactor.

The enzyme catalyses GTP + ATP = 2',3'-cGAMP + 2 diphosphate. It catalyses the reaction GTP + ATP = pppGp(2'-5')A + diphosphate. The catalysed reaction is pppGp(2'-5')A = 2',3'-cGAMP + diphosphate. In terms of biological role, nucleotidyltransferase that catalyzes the formation of cyclic GMP-AMP (2',3'-cGAMP) from ATP and GTP and plays a key role in innate immunity. Acts as a key sensor of double-stranded RNA (dsRNA), the presence of dsRNA in the cytoplasm being a danger signal that triggers the immune responses. Directly binds dsRNA, activating the nucleotidyltransferase activity, leading to synthesis of 2',3'-cGAMP, a second messenger that binds to and activates Sting, thereby triggering the immune response via activation of the NF-kappa-B transcription factor. This chain is Cyclic GMP-AMP synthase-like receptor, found in Frankliniella occidentalis (Western flower thrips).